Here is a 263-residue protein sequence, read N- to C-terminus: Probable cyclic nucleotide phosphodiesterase CPS_4178 (263 aa).

Fe cation is bound by residues Asp21, His23, Asp62, Asn94, His160, His198, and His200. Residues His23, Asp62, and 94 to 95 each bind AMP; that span reads NH. His200 contributes to the AMP binding site.

This sequence belongs to the cyclic nucleotide phosphodiesterase class-III family. Requires Fe(2+) as cofactor.

This Colwellia psychrerythraea (strain 34H / ATCC BAA-681) (Vibrio psychroerythus) protein is Probable cyclic nucleotide phosphodiesterase CPS_4178.